Reading from the N-terminus, the 454-residue chain is DNA primase small subunit (454 aa).

Catalysis depends on residues Glu66, Asp131, and Asp133. The Mg(2+) site is built by Asp131 and Asp133. Mn(2+)-binding residues include Asp131 and Asp133. 131 to 133 (DID) lines the a ribonucleoside 5'-triphosphate pocket. Cys143, Cys144, Cys150, and Cys153 together coordinate Zn(2+). Positions 143–153 (CCSKTNICEKC) match the Zinc knuckle motif motif. 182–188 (SGRRGIH) is a binding site for a ribonucleoside 5'-triphosphate. Residue Asp333 coordinates Mg(2+). Asp333 provides a ligand contact to Mn(2+). Position 342 to 345 (342 to 345 (HLLK)) interacts with a ribonucleoside 5'-triphosphate. Residues 385–420 (DKNSQNDNGHGPTMETNTTENQKDNARGQSNKGHGF) are disordered. 2 stretches are compositionally biased toward polar residues: residues 389–404 (QNDNGHGPTMETNTTE) and 411–420 (RGQSNKGHGF).

It belongs to the eukaryotic-type primase small subunit family. As to quaternary structure, heterodimer of a catalytic subunit spp1/pri1 and a regulatory subunit spp2/pri2, also known as the DNA primase complex. Component of the alpha DNA polymerase complex (also known as the alpha DNA polymerase-primase complex) consisting of four subunits: the catalytic subunit pol1, the accessory subunit spb70/pol12, and the primase complex subunits spp1/pri1 and spp2/pri2 respectively. Requires Mg(2+) as cofactor. It depends on Mn(2+) as a cofactor.

It is found in the nucleus. It catalyses the reaction ssDNA + n NTP = ssDNA/pppN(pN)n-1 hybrid + (n-1) diphosphate.. Catalytic subunit of the DNA primase complex and component of the DNA polymerase alpha complex (also known as the alpha DNA polymerase-primase complex - primosome/replisome) which play an essential role in the initiation of DNA synthesis. During the S phase of the cell cycle, the DNA polymerase alpha complex (composed of a catalytic subunit pol1, an accessory subunit spb70/pol12 and two primase subunits, the catalytic subunit spp1/pri1 and the regulatory subunit spp2/pri2) is recruited to DNA at the replicative forks. The primase subunit of the polymerase alpha complex initiates DNA synthesis by oligomerising short RNA primers on both leading and lagging strands. This Schizosaccharomyces pombe (strain 972 / ATCC 24843) (Fission yeast) protein is DNA primase small subunit.